Reading from the N-terminus, the 473-residue chain is 3-isopropylmalate dehydratase large subunit (473 aa).

Positions 348, 413, and 416 each coordinate [4Fe-4S] cluster.

The protein belongs to the aconitase/IPM isomerase family. LeuC type 1 subfamily. In terms of assembly, heterodimer of LeuC and LeuD. The cofactor is [4Fe-4S] cluster.

It catalyses the reaction (2R,3S)-3-isopropylmalate = (2S)-2-isopropylmalate. It functions in the pathway amino-acid biosynthesis; L-leucine biosynthesis; L-leucine from 3-methyl-2-oxobutanoate: step 2/4. In terms of biological role, catalyzes the isomerization between 2-isopropylmalate and 3-isopropylmalate, via the formation of 2-isopropylmaleate. This Parvibaculum lavamentivorans (strain DS-1 / DSM 13023 / NCIMB 13966) protein is 3-isopropylmalate dehydratase large subunit.